Reading from the N-terminus, the 193-residue chain is Holliday junction branch migration complex subunit RuvA (193 aa).

The domain I stretch occupies residues 1-64; that stretch reads MIGRIAGVLL…EDAHLLYGFL (64 aa). Residues 65 to 139 form a domain II region; that stretch reads TPQERSTFRE…GKLGADLGAM (75 aa). A flexible linker region spans residues 139–143; sequence MAGAA. The interval 144–193 is domain III; sequence SQSDHASDILNALLALGYSEKEGLAAIKNVPAGTGVSEGIKLALKALSKA.

This sequence belongs to the RuvA family. In terms of assembly, homotetramer. Forms an RuvA(8)-RuvB(12)-Holliday junction (HJ) complex. HJ DNA is sandwiched between 2 RuvA tetramers; dsDNA enters through RuvA and exits via RuvB. An RuvB hexamer assembles on each DNA strand where it exits the tetramer. Each RuvB hexamer is contacted by two RuvA subunits (via domain III) on 2 adjacent RuvB subunits; this complex drives branch migration. In the full resolvosome a probable DNA-RuvA(4)-RuvB(12)-RuvC(2) complex forms which resolves the HJ.

The protein resides in the cytoplasm. Functionally, the RuvA-RuvB-RuvC complex processes Holliday junction (HJ) DNA during genetic recombination and DNA repair, while the RuvA-RuvB complex plays an important role in the rescue of blocked DNA replication forks via replication fork reversal (RFR). RuvA specifically binds to HJ cruciform DNA, conferring on it an open structure. The RuvB hexamer acts as an ATP-dependent pump, pulling dsDNA into and through the RuvAB complex. HJ branch migration allows RuvC to scan DNA until it finds its consensus sequence, where it cleaves and resolves the cruciform DNA. This Paraburkholderia phymatum (strain DSM 17167 / CIP 108236 / LMG 21445 / STM815) (Burkholderia phymatum) protein is Holliday junction branch migration complex subunit RuvA.